The primary structure comprises 223 residues: Putative 3-methyladenine DNA glycosylase (223 aa).

This sequence belongs to the DNA glycosylase MPG family.

The protein is Putative 3-methyladenine DNA glycosylase of Pseudomonas savastanoi pv. phaseolicola (strain 1448A / Race 6) (Pseudomonas syringae pv. phaseolicola (strain 1448A / Race 6)).